Here is a 714-residue protein sequence, read N- to C-terminus: MFNTHKVEIEWGGRPLTLETGKIARQADGAVLATYGETAVLATVVSAKEPKPGQDFFPLTVNYQEKTYAAGKIPGGYFKREGRPSENETLVSRLIDRPIRPLFVDGYKNDTQVVITVLQHDLENNPDILSMVAASAALTISGVPFMGPISGARVGYIDGEYVLNPNIDEMPESKLDLVVAGTSEAVLMVESEAQELPEDVMLGAVMFGHKSFQPVIDAIIKLAEVAAKEPRDFQPEDLSELEAKVLAVVENDLREAYKITEKQARYAAVDAAKAKAKEHFFPEGVEETEMSAEQFATIFKHLQAKIVRWNILDTGNRIDGRDLSTVRPIVSEVGILPRTHGSALFTRGETQAIVVATLGTGEDEQMIDALTGTYKESFMLHYNFPPYSVGETGRMGSPGRREIGHGKLAWRAIHPMLPAAEQFPYTIRAVSEITESNGSSSMATVCGTSLALMDAGVPIVRPVAGIAMGLIKEGERFAVLSDILGDEDHLGDMDFKVAGTEFGITSLQMDIKIDGITEEIMKVALEQAKGGRVHILGEMAKAISSSRAELGEFAPRIEVMNIPTDKIRDVIGSGGKVIREIVEKTGAKINIEDDGTVKIASSNGKEIEAAKKWIHSIVAEPEVGEIYEGTVVKTADFGAFVNFFGPRDGLVHISQLAADRVAKTTDVVKEGQKVWVKLMGFDERGKVRLSMKVVDQETGKEIVAEKKKEEVDAE.

Mg(2+)-binding residues include Asp-488 and Asp-494. A KH domain is found at Pro-555 to Ile-614. Residues Gly-624–Lys-692 form the S1 motif domain.

The protein belongs to the polyribonucleotide nucleotidyltransferase family. Mg(2+) is required as a cofactor.

The protein localises to the cytoplasm. The catalysed reaction is RNA(n+1) + phosphate = RNA(n) + a ribonucleoside 5'-diphosphate. Its function is as follows. Involved in mRNA degradation. Catalyzes the phosphorolysis of single-stranded polyribonucleotides processively in the 3'- to 5'-direction. This chain is Polyribonucleotide nucleotidyltransferase, found in Brucella abortus biovar 1 (strain 9-941).